We begin with the raw amino-acid sequence, 85 residues long: Large ribosomal subunit protein bL27 (85 aa).

Over residues Met1–Thr10 the composition is skewed to gly residues. Residues Met1–Leu21 form a disordered region.

The protein belongs to the bacterial ribosomal protein bL27 family.

The polypeptide is Large ribosomal subunit protein bL27 (Leptothrix cholodnii (strain ATCC 51168 / LMG 8142 / SP-6) (Leptothrix discophora (strain SP-6))).